Here is a 572-residue protein sequence, read N- to C-terminus: MRTSQYLLSTLKETPADAEVISHQLMLRAGMIRKLASGLYTWLPTGLRVLKKVENIVREEMNNAGAIEVSMPVVQPADLWVESGRWEQYGPELLRFVDRGERSFVLGPTHEEVITDLIRNELNSYKQLPLNFFQIQTKFRDEVRPRFGVMRSREFLMKDSYSFHTSQESLQETYDKMYEAYSKIFSRMGLDFRAVQADTGSIGGSASHEFQVLAQSGEDDVIFSDTSDYAANIEFAEALAPSAPRAAASEEMKLVDTPNAKTIAELVEQFNLPIEKTVKTLLVKAVEGSAYPLVALLVRGDHELNEVKAEKLAQVASPLTFATEAEIRAVVNAGPGSLGPVNMPIPVVIDRTVAAMSDFSAGANIDGQHYFGINWDRDVATPEVADIRNVVAGDPSPDGQGTLMIKRGIEVGHIFQLGTKYSEALNASVQGEDGRNQILTMGCYGIGVTRVVAAAIEQNHDERGIVWPDNLAPFQVAILPMNMHKSYRVQELAEKLYSELRAQGIEVLMDDRKERPGVMFADMELIGIPHTVVIGDRNLDSDDIEYKYRRSGEKQMIKTGDILDYLVKAIKG.

It belongs to the class-II aminoacyl-tRNA synthetase family. ProS type 1 subfamily. In terms of assembly, homodimer.

The protein localises to the cytoplasm. The catalysed reaction is tRNA(Pro) + L-proline + ATP = L-prolyl-tRNA(Pro) + AMP + diphosphate. Catalyzes the attachment of proline to tRNA(Pro) in a two-step reaction: proline is first activated by ATP to form Pro-AMP and then transferred to the acceptor end of tRNA(Pro). As ProRS can inadvertently accommodate and process non-cognate amino acids such as alanine and cysteine, to avoid such errors it has two additional distinct editing activities against alanine. One activity is designated as 'pretransfer' editing and involves the tRNA(Pro)-independent hydrolysis of activated Ala-AMP. The other activity is designated 'posttransfer' editing and involves deacylation of mischarged Ala-tRNA(Pro). The misacylated Cys-tRNA(Pro) is not edited by ProRS. This is Proline--tRNA ligase from Enterobacter sp. (strain 638).